A 508-amino-acid polypeptide reads, in one-letter code: POTE ankyrin domain family member G (508 aa).

ANK repeat units lie at residues 172 to 201, 205 to 234, 238 to 267, 271 to 300, and 304 to 333; these read QKRT…QLNI, KKRT…DPNI, YGNT…DIES, HGLT…NLNA, and YGRT…DVSS. Polar residues predominate over residues 367-376; that stretch reads KVSSENSNPE. Positions 367–488 are disordered; sequence KVSSENSNPE…QLSEEQNTGI (122 aa). Basic and acidic residues-rich tracts occupy residues 377–392 and 406–421; these read QDLK…RLKG and EINK…EMKK. A compositionally biased stretch (polar residues) spans 476–488; sequence TQKQLSEEQNTGI.

This sequence belongs to the POTE family.

This Homo sapiens (Human) protein is POTE ankyrin domain family member G (POTEG).